Reading from the N-terminus, the 798-residue chain is Interphotoreceptor matrix proteoglycan 1 (798 aa).

A signal peptide spans 1–20; it reads MNLEIKHAILVLWIFLQVQG. A glycan (N-linked (GlcNAc...) asparagine) is linked at Asn-142. In terms of domain architecture, SEA 1 spans 238-360; the sequence is SEEKVEFSIS…PEAYLTAADL (123 aa). Thr-442 and Thr-445 each carry an O-linked (GalNAc...) threonine glycan. The SEA 2 domain occupies 574–687; it reads HELVVFFSLR…YSLDIEPADQ (114 aa). N-linked (GlcNAc...) asparagine glycosylation is found at Asn-595 and Asn-619. The Heparin- and hyaluronan-binding motif lies at 624–632; it reads KQLEILSFR. 2 N-linked (GlcNAc...) asparagine glycosylation sites follow: Asn-633 and Asn-651. The interval 741-798 is disordered; the sequence is ASQGQATPCRPPDHSTNQARQPSVKKLQRQQNKVVKKRNSELSATDFEELDDQDWEGN. A compositionally biased stretch (acidic residues) spans 786 to 798; the sequence is DFEELDDQDWEGN.

Highly glycosylated (N- and O-linked carbohydrates and sialic acid).

The protein localises to the cell projection. It localises to the cilium. It is found in the photoreceptor outer segment. Its subcellular location is the secreted. The protein resides in the extracellular space. The protein localises to the extracellular matrix. It localises to the interphotoreceptor matrix. It is found in the photoreceptor inner segment. Functionally, chondroitin sulfate-, heparin- and hyaluronan-binding protein. May serve to form a basic macromolecular scaffold comprising the insoluble interphotoreceptor matrix. This is Interphotoreceptor matrix proteoglycan 1 from Rattus norvegicus (Rat).